A 761-amino-acid polypeptide reads, in one-letter code: Phosphoribosylformylglycinamidine synthase subunit PurL (761 aa).

Over residues 1-13 (MTSRVDTVDNAAS) the composition is skewed to polar residues. The segment at 1 to 23 (MTSRVDTVDNAASTPDHPQPFAE) is disordered. The active site involves His57. ATP-binding residues include Tyr60 and Lys104. Position 106 (Glu106) interacts with Mg(2+). Substrate-binding positions include 107 to 110 (SHNH) and Arg129. His108 acts as the Proton acceptor in catalysis. A Mg(2+)-binding site is contributed by Asp130. Residue Gln259 participates in substrate binding. Asp287 lines the Mg(2+) pocket. 331-333 (ESQ) provides a ligand contact to substrate. ATP is bound by residues Asn519 and Gly556. Asn557 lines the Mg(2+) pocket. Ser559 provides a ligand contact to substrate.

Belongs to the FGAMS family. Monomer. Part of the FGAM synthase complex composed of 1 PurL, 1 PurQ and 2 PurS subunits.

It localises to the cytoplasm. The enzyme catalyses N(2)-formyl-N(1)-(5-phospho-beta-D-ribosyl)glycinamide + L-glutamine + ATP + H2O = 2-formamido-N(1)-(5-O-phospho-beta-D-ribosyl)acetamidine + L-glutamate + ADP + phosphate + H(+). It participates in purine metabolism; IMP biosynthesis via de novo pathway; 5-amino-1-(5-phospho-D-ribosyl)imidazole from N(2)-formyl-N(1)-(5-phospho-D-ribosyl)glycinamide: step 1/2. Functionally, part of the phosphoribosylformylglycinamidine synthase complex involved in the purines biosynthetic pathway. Catalyzes the ATP-dependent conversion of formylglycinamide ribonucleotide (FGAR) and glutamine to yield formylglycinamidine ribonucleotide (FGAM) and glutamate. The FGAM synthase complex is composed of three subunits. PurQ produces an ammonia molecule by converting glutamine to glutamate. PurL transfers the ammonia molecule to FGAR to form FGAM in an ATP-dependent manner. PurS interacts with PurQ and PurL and is thought to assist in the transfer of the ammonia molecule from PurQ to PurL. The protein is Phosphoribosylformylglycinamidine synthase subunit PurL of Mycobacteroides abscessus (strain ATCC 19977 / DSM 44196 / CCUG 20993 / CIP 104536 / JCM 13569 / NCTC 13031 / TMC 1543 / L948) (Mycobacterium abscessus).